The chain runs to 205 residues: Potassium-transporting ATPase KdpC subunit (205 aa).

A helical membrane pass occupies residues 7 to 27; the sequence is PAIVILVALTIITGLIYPLAM.

This sequence belongs to the KdpC family. The system is composed of three essential subunits: KdpA, KdpB and KdpC.

The protein resides in the cell inner membrane. Its function is as follows. Part of the high-affinity ATP-driven potassium transport (or Kdp) system, which catalyzes the hydrolysis of ATP coupled with the electrogenic transport of potassium into the cytoplasm. This subunit acts as a catalytic chaperone that increases the ATP-binding affinity of the ATP-hydrolyzing subunit KdpB by the formation of a transient KdpB/KdpC/ATP ternary complex. The chain is Potassium-transporting ATPase KdpC subunit from Nitrobacter hamburgensis (strain DSM 10229 / NCIMB 13809 / X14).